A 30-amino-acid polypeptide reads, in one-letter code: Cyclotide cter-P (30 aa).

Residues 1-30 constitute a cross-link (cyclopeptide (Gly-Asn)); it reads GIPCGESCVFIPCITAAIGCSCKSKVCYRN. 3 disulfides stabilise this stretch: cysteine 4-cysteine 20, cysteine 8-cysteine 22, and cysteine 13-cysteine 27.

Post-translationally, this is a cyclic peptide.

Its subcellular location is the secreted. Probably participates in a plant defense mechanism. In Clitoria ternatea (Butterfly pea), this protein is Cyclotide cter-P.